The sequence spans 1070 residues: DNA-directed RNA polymerase subunit beta (1070 aa).

Belongs to the RNA polymerase beta chain family. As to quaternary structure, in plastids the minimal PEP RNA polymerase catalytic core is composed of four subunits: alpha, beta, beta', and beta''. When a (nuclear-encoded) sigma factor is associated with the core the holoenzyme is formed, which can initiate transcription.

The protein localises to the plastid. It localises to the chloroplast. The catalysed reaction is RNA(n) + a ribonucleoside 5'-triphosphate = RNA(n+1) + diphosphate. In terms of biological role, DNA-dependent RNA polymerase catalyzes the transcription of DNA into RNA using the four ribonucleoside triphosphates as substrates. The protein is DNA-directed RNA polymerase subunit beta of Silene latifolia (White campion).